The sequence spans 483 residues: V-type proton ATPase subunit H (483 aa).

Position 483 is a phosphoserine (S483).

This sequence belongs to the V-ATPase H subunit family. V-ATPase is a heteromultimeric enzyme made up of two complexes: the ATP-hydrolytic V1 complex and the proton translocation V0 complex. The V1 complex consists of three catalytic AB heterodimers that form a heterohexamer, three peripheral stalks each consisting of EG heterodimers, one central rotor including subunits D and F, and the regulatory subunits C and H. The proton translocation complex V0 consists of the proton transport subunit a, a ring of proteolipid subunits c9c'', rotary subunit d, subunits e and f, and the accessory subunits ATP6AP1/Ac45 and ATP6AP2/PRR. Interacts with AP2M1. Interacts with TM9SF4 in colon cancer cells. In terms of assembly, (Microbial infection) Interacts with HIV-1 Nef protein. As to quaternary structure, (Microbial infection) Interacts with M.tuberculosis PtpA, which blocks V-ATPase trafficking and phagosome acidification. Widely expressed.

The protein resides in the cytoplasmic vesicle. It localises to the clathrin-coated vesicle membrane. In terms of biological role, subunit of the V1 complex of vacuolar(H+)-ATPase (V-ATPase), a multisubunit enzyme composed of a peripheral complex (V1) that hydrolyzes ATP and a membrane integral complex (V0) that translocates protons. V-ATPase is responsible for acidifying and maintaining the pH of intracellular compartments and in some cell types, is targeted to the plasma membrane, where it is responsible for acidifying the extracellular environment. Subunit H is essential for V-ATPase activity, but not for the assembly of the complex. Involved in the endocytosis mediated by clathrin-coated pits, required for the formation of endosomes. The chain is V-type proton ATPase subunit H (ATP6V1H) from Homo sapiens (Human).